Reading from the N-terminus, the 301-residue chain is Protein RESTRICTED TEV MOVEMENT 3 (301 aa).

The region spanning 6 to 134 (DKKITWTIKN…NGELKIVVEI (129 aa)) is the MATH domain. Positions 235–289 (KLDWLEKKLYEVSEKKENEEASETGLQEMEEELKDMKQKCLEMEALVEKEKAKVS) form a coiled coil.

Self-interacts. Interacts with RTM1.

In terms of biological role, required for the restriction of long-distance movement of the pathogenic tobacco etch virus (TEV) without causing a hypersensitive response or inducing systemic acquired resistance. In Arabidopsis thaliana (Mouse-ear cress), this protein is Protein RESTRICTED TEV MOVEMENT 3 (RTM3).